The chain runs to 204 residues: Imidazole glycerol phosphate synthase subunit HisH (204 aa).

The Glutamine amidotransferase type-1 domain maps to 1-204 (MIKIVDYGLG…MTLLKNFSEI (204 aa)). Catalysis depends on cysteine 80, which acts as the Nucleophile. Active-site residues include histidine 186 and glutamate 188.

As to quaternary structure, heterodimer of HisH and HisF.

The protein resides in the cytoplasm. The catalysed reaction is 5-[(5-phospho-1-deoxy-D-ribulos-1-ylimino)methylamino]-1-(5-phospho-beta-D-ribosyl)imidazole-4-carboxamide + L-glutamine = D-erythro-1-(imidazol-4-yl)glycerol 3-phosphate + 5-amino-1-(5-phospho-beta-D-ribosyl)imidazole-4-carboxamide + L-glutamate + H(+). It catalyses the reaction L-glutamine + H2O = L-glutamate + NH4(+). Its pathway is amino-acid biosynthesis; L-histidine biosynthesis; L-histidine from 5-phospho-alpha-D-ribose 1-diphosphate: step 5/9. In terms of biological role, IGPS catalyzes the conversion of PRFAR and glutamine to IGP, AICAR and glutamate. The HisH subunit catalyzes the hydrolysis of glutamine to glutamate and ammonia as part of the synthesis of IGP and AICAR. The resulting ammonia molecule is channeled to the active site of HisF. This is Imidazole glycerol phosphate synthase subunit HisH from Bdellovibrio bacteriovorus (strain ATCC 15356 / DSM 50701 / NCIMB 9529 / HD100).